Reading from the N-terminus, the 238-residue chain is MGSISLSNSMPITRLPLLTSLYHQSFLPISSSSFSLLPLSNRRRSSTFSPSITVSAFFAAPASVNNNNSVPAKNGGYTVGDFMTPRQNLHVVKPSTSVDDALELLVEKKVTGLPVIDDNWTLVGVVSDYDLLALDSISGRSQNDTNLFPDVDSTWKTFNELQKLISKTYGKVVGDLMTPSPLVVRDSTNLEDAARLLLETKFRRLPVVDADGKLIGILTRGNVVRAALQIKRETENST.

The transit peptide at Met1–Pro71 directs the protein to the chloroplast. 2 CBS domains span residues Met83 to Thr145 and Met177 to Thr234.

Its subcellular location is the plastid. The protein localises to the chloroplast stroma. This chain is CBS domain-containing protein CBSX2, chloroplastic (CBSX2), found in Arabidopsis thaliana (Mouse-ear cress).